The chain runs to 181 residues: MKPSLEDTLLASIRTIPDYPKPGILFRDITTLLGNARAFRRAIDELVHPYAGQKVDKIAGIEARGFILGGAVAHQLSAGFVPIRKKGKLPFDTVRVAYSLEYGLDEMEMHKDGVAPGEKVILVDDLIATGGTAEAAVKLLRQIGADILAACFVIDLPDLGGRAKLEALGVPVRTLIGFEGH.

Belongs to the purine/pyrimidine phosphoribosyltransferase family. Homodimer.

The protein localises to the cytoplasm. The catalysed reaction is AMP + diphosphate = 5-phospho-alpha-D-ribose 1-diphosphate + adenine. It functions in the pathway purine metabolism; AMP biosynthesis via salvage pathway; AMP from adenine: step 1/1. Functionally, catalyzes a salvage reaction resulting in the formation of AMP, that is energically less costly than de novo synthesis. This Mesorhizobium japonicum (strain LMG 29417 / CECT 9101 / MAFF 303099) (Mesorhizobium loti (strain MAFF 303099)) protein is Adenine phosphoribosyltransferase.